A 216-amino-acid polypeptide reads, in one-letter code: uncharacterized protein (216 aa).

Residues 1-21 traverse the membrane as a helical segment; the sequence is MTIVHFVGSLFFFFFFSYIFF.

The protein localises to the membrane. This is an uncharacterized protein from Saccharomyces cerevisiae (strain ATCC 204508 / S288c) (Baker's yeast).